Here is a 327-residue protein sequence, read N- to C-terminus: MSFLGGFFGPICEIDVVLNDGETRKMAEMKTEDGKVEKHYLFYDGESVSGKVNLAFKQPGKRLEHQGIRIEFVGQIELFNDKSNTHEFVNLVKELALPGELTQSRSYDFEFMQVEKPYESYIGANVRLRYFLKVTIVRRLTDLVKEYDLIVHQLATYPDVNNSIKMEVGIEDCLHIEFEYNKSKYHLKDVIVGKIYFLLVRIKIQHMELQLIKKEITGIGPSTTTETETIAKYEIMDGAPVKGESIPIRLFLAGYDPTPTMRDVNKKFSVRYFLNLVLVDEEDRRYFKQQEIILWRKAPEKLRKQRTNFHQRFESPESQASAEQPEM.

Residues 306-327 (RTNFHQRFESPESQASAEQPEM) are disordered. A Phosphoserine modification is found at Ser315. Residues 316 to 327 (PESQASAEQPEM) show a composition bias toward polar residues.

Belongs to the VPS26 family. As to quaternary structure, component of the heterotrimeric retromer cargo-selective complex (CSC), also described as vacuolar protein sorting subcomplex (VPS), formed by VPS26 (VPS26A or VPS26B), VPS29 and VPS35. The CSC has a highly elongated structure with VPS26 and VPS29 binding independently at opposite distal ends of VPS35 as central platform. The CSC is believed to associate with variable sorting nexins to form functionally distinct retromer complex variants. The originally described retromer complex (also called SNX-BAR retromer) is a pentamer containing the CSC and a heterodimeric membrane-deforming subcomplex formed between SNX1 or SNX2 and SNX5 or SNX6 (also called SNX-BAR subcomplex); the respective CSC and SNX-BAR subcomplexes associate with low affinity. The CSC associates with SNX3 to form a SNX3-retromer complex. The CSC associates with SNX27, the WASH complex and the SNX-BAR subcomplex to form the SNX27-retromer complex. Interacts with VPS29, VPS35, SNX27, SNX1, SNX2, SNX5, SNX6, SNX3, RAB7A, ECPAS, EHD1, WASHC5, SORL1.

It is found in the cytoplasm. It localises to the endosome membrane. The protein localises to the early endosome. Acts as a component of the retromer cargo-selective complex (CSC). The CSC is believed to be the core functional component of retromer or respective retromer complex variants acting to prevent missorting of selected transmembrane cargo proteins into the lysosomal degradation pathway. The recruitment of the CSC to the endosomal membrane involves RAB7A and SNX3. The SNX-BAR retromer mediates retrograde transport of cargo proteins from endosomes to the trans-Golgi network (TGN) and is involved in endosome-to-plasma membrane transport for cargo protein recycling. The SNX3-retromer mediates the retrograde endosome-to-TGN transport of WLS distinct from the SNX-BAR retromer pathway. The SNX27-retromer is believed to be involved in endosome-to-plasma membrane trafficking and recycling of a broad spectrum of cargo proteins. The CSC complex seems to act as recruitment hub for other proteins, such as the WASH complex and TBC1D5. Required for retrograde transport of lysosomal enzyme receptor IGF2R. Required to regulate transcytosis of the polymeric immunoglobulin receptor (pIgR-pIgA). Required for the endosomal localization of WASHC2 (indicative for the WASH complex). Required for the endosomal localization of TBC1D5. Mediates retromer cargo recognition of SORL1 and is involved in trafficking of SORL1 implicated in sorting and processing of APP. Involved in retromer-independent lysosomal sorting of F2R. Involved in recycling of ADRB2. Acts redundantly with VSP26B in SNX-27 mediated endocytic recycling of SLC2A1/GLUT1. Enhances the affinity of SNX27 for PDZ-binding motifs in cargo proteins. This chain is Vacuolar protein sorting-associated protein 26A (VPS26A), found in Bos taurus (Bovine).